Here is a 494-residue protein sequence, read N- to C-terminus: MAEIEELNDQMKVRREKMGNLHDAGIDPFGHKFTRTHNSQELHEAYDEKTKEELHELALSGIVAGRLMTKRGKGKVGFAHLQDREGQIQLYVRKDEVGEENYEIFKKADLGDFLGVEGEIMKTDMGELSIKAKKLTFLSKALRPLPEKFHGLTDTETRYRKRYLDLISNKESFNRFVTRSKIISEIRRYMDGRGYLEVETPVLNNEAGGASARPFYTHHNSLDIDMALRIATELHLKRLIVGGMEKVYELGRVFRNEGMDMTHNPEFTTMESYEAYADFEDIMDLTEGIFQHVAKTVVGQDVLEYDGKEINVGGKFKRVHMVDAIKEVAGVDFWPEMTFEEATALAKEHDIHVEKHFTSVGHIINEFFEKYVEETLIQPTFVFGHPKEISPLAKMNEKDPRFTDRFELFINGKEYANAFSELNDPIDQLERFEAQAKAKELGDDEATGVDYDYVEALEHGMPPTGGLGIGIDRLVMLFTGTTSIRDVLLFPTMK.

The Mg(2+) site is built by glutamate 407 and glutamate 414.

Belongs to the class-II aminoacyl-tRNA synthetase family. As to quaternary structure, homodimer. Mg(2+) serves as cofactor.

Its subcellular location is the cytoplasm. The enzyme catalyses tRNA(Lys) + L-lysine + ATP = L-lysyl-tRNA(Lys) + AMP + diphosphate. In Lactococcus lactis subsp. cremoris (strain SK11), this protein is Lysine--tRNA ligase.